Consider the following 203-residue polypeptide: ATP-dependent Clp protease proteolytic subunit (203 aa).

S103 (nucleophile) is an active-site residue. Residue H128 is part of the active site.

It belongs to the peptidase S14 family. In terms of assembly, fourteen ClpP subunits assemble into 2 heptameric rings which stack back to back to give a disk-like structure with a central cavity, resembling the structure of eukaryotic proteasomes.

It localises to the cytoplasm. It catalyses the reaction Hydrolysis of proteins to small peptides in the presence of ATP and magnesium. alpha-casein is the usual test substrate. In the absence of ATP, only oligopeptides shorter than five residues are hydrolyzed (such as succinyl-Leu-Tyr-|-NHMec, and Leu-Tyr-Leu-|-Tyr-Trp, in which cleavage of the -Tyr-|-Leu- and -Tyr-|-Trp bonds also occurs).. Functionally, cleaves peptides in various proteins in a process that requires ATP hydrolysis. Has a chymotrypsin-like activity. Plays a major role in the degradation of misfolded proteins. The sequence is that of ATP-dependent Clp protease proteolytic subunit from Dichelobacter nodosus (strain VCS1703A).